The following is a 105-amino-acid chain: Nucleoid-associated protein SaurJH1_0513 (105 aa).

Positions 1 to 33 (MRGGGNMQQMMKQMQKMQKKMAQEQKKLKEERI) are disordered. Low complexity predominate over residues 7-16 (MQQMMKQMQK). A compositionally biased stretch (basic and acidic residues) spans 21–33 (MAQEQKKLKEERI).

It belongs to the YbaB/EbfC family. In terms of assembly, homodimer.

The protein resides in the cytoplasm. The protein localises to the nucleoid. Binds to DNA and alters its conformation. May be involved in regulation of gene expression, nucleoid organization and DNA protection. The chain is Nucleoid-associated protein SaurJH1_0513 from Staphylococcus aureus (strain JH1).